A 191-amino-acid polypeptide reads, in one-letter code: FMN reductase (NADPH) (191 aa).

The protein belongs to the SsuE family. Homodimer.

The enzyme catalyses FMNH2 + NADP(+) = FMN + NADPH + 2 H(+). Functionally, catalyzes an NADPH-dependent reduction of FMN, but is also able to reduce FAD or riboflavin. In Escherichia coli (strain K12), this protein is FMN reductase (NADPH) (ssuE).